A 5386-amino-acid chain; its full sequence is Nonribosomal peptide synthetase 2 (5386 aa).

The segment at 45–435 (HDANAIDFLE…QGLLECLGRV (391 aa)) is adenylation 1. One can recognise a Carrier 1 domain in the interval 544–617 (SPKDPIGHSV…DLIEVCRESK (74 aa)). At Ser-578 the chain carries O-(pantetheine 4'-phosphoryl)serine. Residues 652-1059 (LPCTPLQEAM…VDADRHVSAI (408 aa)) form a condensation 1 region. Residues 1089 to 1482 (EKWAATDPHR…GRTDDQVKIR (394 aa)) are adenylation 2. Residues 1611–1688 (ELLSQWERDV…SLASLKKLQS (78 aa)) enclose the Carrier 2 domain. Position 1648 is an O-(pantetheine 4'-phosphoryl)serine (Ser-1648). A condensation 2 region spans residues 1731-2141 (ILPCTPLQEA…ALSADTDMFP (411 aa)). The tract at residues 2166-2551 (FERTALLHPD…GRLDDQVKIR (386 aa)) is adenylation 3. Residues 2652 to 2725 (SKTESEVRNI…DLAEHLDQIS (74 aa)) form the Carrier 3 domain. Ser-2686 carries the post-translational modification O-(pantetheine 4'-phosphoryl)serine. A condensation 3 region spans residues 2763-3174 (RPCTPLQNGM…HSQIPLAKTD (412 aa)). The adenylation 4 stretch occupies residues 3202 to 3603 (EKTAQEHPQR…GRADDQVKLR (402 aa)). Positions 3728–3805 (EQWSKQEEKL…RLAKSLAANS (78 aa)) constitute a Carrier 4 domain. The residue at position 3765 (Ser-3765) is an O-(pantetheine 4'-phosphoryl)serine. Positions 3846-4250 (LAPCTPLQQG…LDQAINDPSA (405 aa)) are condensation 4. The Carrier 5 domain maps to 4281-4357 (FEWSDNAIAI…KMAQNMSMKN (77 aa)). O-(pantetheine 4'-phosphoryl)serine is present on Ser-4318. Residues 4391 to 4802 (EEILPLTPLQ…ERAEAPVIDM (412 aa)) form a condensation 5 region. Residues 4821 to 4842 (HTGSGHVESGEDDGQDTPSTET) are disordered. The 74-residue stretch at 4840 to 4913 (TETTNRIRKI…KMAKLADARA (74 aa)) folds into the Carrier 6 domain. Ser-4874 is modified (O-(pantetheine 4'-phosphoryl)serine). Positions 4952 to 5257 (QMLPVTAGQL…VQAHLRHLND (306 aa)) are condensation 6.

It belongs to the NRP synthetase family.

It functions in the pathway siderophore biosynthesis. Functionally, nonribosomal peptide synthetase; part of the gene cluster that mediates the biosynthesis of hydroxamate-containing siderophores that play a critical role in virulence. Cochliobolus heterostrophus produces extracellular coprogen-type siderophores including coprogen, neocoprogen I and neocoprogen II, as well as the intracellular siderophore ferricrocin. The role of extracellular siderophores is to supply iron to the fungus during plant infection, and the intracellular ferricrocin is required for intracellular iron distribution and storage with a crucial role in ascus and ascospore development. SIDA2 catalyzes the conversion of L-ornithine to N(5)-hydroxyornithine, the first step in the biosynthesis of all hydroxamate-containing siderophores. The assembly of extracellular coprogen-type siderophores is then performed by the nonribosomal peptide synthetase (NRPS) NPS6 whereas the intracellular siderophore ferricrocin is assembled by NPS2. This is Nonribosomal peptide synthetase 2 from Cochliobolus heterostrophus (strain C4 / ATCC 48331 / race T) (Southern corn leaf blight fungus).